The sequence spans 178 residues: Inner membrane-spanning protein YciB (178 aa).

6 helical membrane passes run 1–21 (MKIL…KMTG), 23–43 (IIIA…FTWF), 51–71 (MHLV…LLGD), 77–97 (WKPT…QFIG), 120–140 (LNLA…YVAF), and 150–170 (FKLF…GIYL).

It belongs to the YciB family.

It is found in the cell inner membrane. In terms of biological role, plays a role in cell envelope biogenesis, maintenance of cell envelope integrity and membrane homeostasis. This Marinomonas sp. (strain MWYL1) protein is Inner membrane-spanning protein YciB.